The chain runs to 246 residues: 1-(5-phosphoribosyl)-5-[(5-phosphoribosylamino)methylideneamino] imidazole-4-carboxamide isomerase (246 aa).

D8 acts as the Proton acceptor in catalysis. D129 acts as the Proton donor in catalysis.

It belongs to the HisA/HisF family.

It is found in the cytoplasm. The catalysed reaction is 1-(5-phospho-beta-D-ribosyl)-5-[(5-phospho-beta-D-ribosylamino)methylideneamino]imidazole-4-carboxamide = 5-[(5-phospho-1-deoxy-D-ribulos-1-ylimino)methylamino]-1-(5-phospho-beta-D-ribosyl)imidazole-4-carboxamide. It functions in the pathway amino-acid biosynthesis; L-histidine biosynthesis; L-histidine from 5-phospho-alpha-D-ribose 1-diphosphate: step 4/9. In Nitrobacter hamburgensis (strain DSM 10229 / NCIMB 13809 / X14), this protein is 1-(5-phosphoribosyl)-5-[(5-phosphoribosylamino)methylideneamino] imidazole-4-carboxamide isomerase.